A 364-amino-acid polypeptide reads, in one-letter code: tRNA 2-selenouridine synthase (364 aa).

The region spanning 14–137 is the Rhodanese domain; it reads LIADTPIIDV…LRQTAIQATI (124 aa). The active-site S-selanylcysteine intermediate is Cys97.

The protein belongs to the SelU family. Monomer.

The catalysed reaction is 5-methylaminomethyl-2-thiouridine(34) in tRNA + selenophosphate + (2E)-geranyl diphosphate + H2O + H(+) = 5-methylaminomethyl-2-selenouridine(34) in tRNA + (2E)-thiogeraniol + phosphate + diphosphate. The enzyme catalyses 5-methylaminomethyl-2-thiouridine(34) in tRNA + (2E)-geranyl diphosphate = 5-methylaminomethyl-S-(2E)-geranyl-thiouridine(34) in tRNA + diphosphate. It carries out the reaction 5-methylaminomethyl-S-(2E)-geranyl-thiouridine(34) in tRNA + selenophosphate + H(+) = 5-methylaminomethyl-2-(Se-phospho)selenouridine(34) in tRNA + (2E)-thiogeraniol. It catalyses the reaction 5-methylaminomethyl-2-(Se-phospho)selenouridine(34) in tRNA + H2O = 5-methylaminomethyl-2-selenouridine(34) in tRNA + phosphate. Involved in the post-transcriptional modification of the uridine at the wobble position (U34) of tRNA(Lys), tRNA(Glu) and tRNA(Gln). Catalyzes the conversion of 2-thiouridine (S2U-RNA) to 2-selenouridine (Se2U-RNA). Acts in a two-step process involving geranylation of 2-thiouridine (S2U) to S-geranyl-2-thiouridine (geS2U) and subsequent selenation of the latter derivative to 2-selenouridine (Se2U) in the tRNA chain. In Escherichia fergusonii (strain ATCC 35469 / DSM 13698 / CCUG 18766 / IAM 14443 / JCM 21226 / LMG 7866 / NBRC 102419 / NCTC 12128 / CDC 0568-73), this protein is tRNA 2-selenouridine synthase.